We begin with the raw amino-acid sequence, 1292 residues long: Kinesin-like protein KIN-12A (1292 aa).

Residues 1 to 86 (MKKHFTLPRN…LSAETATESG (86 aa)) are disordered. A compositionally biased stretch (low complexity) spans 19–29 (PHSPNPSISKS). A compositionally biased stretch (pro residues) spans 62–71 (PLPPRPPPSN). The Kinesin motor domain occupies 91–426 (GVKVIVRMKP…LRFAQRAKAI (336 aa)). Residue 165–172 (GQTGSGKT) participates in ATP binding. Microtubules-binding stretches follow at residues 293-297 (SSRSH), 326-332 (VDLAGSE), and 375-379 (HIPYR). The segment at 424 to 461 (KAIQNKAVVNEVMQDDVNFLRGVIHQLRDELQRMKNDG) is neck. Positions 677 to 724 (SVSPTIRNSRKSLKTSELSTASQKDSEGENLVTEAADPSPATSKKMNN) are disordered. 2 coiled-coil regions span residues 945–992 (EVLK…CYID) and 1047–1232 (SEEL…NQLV).

This sequence belongs to the TRAFAC class myosin-kinesin ATPase superfamily. Kinesin family. KIN-12 subfamily. In terms of assembly, homodimer and heterodimer with KIN12B. Interacts with TIO.

The protein localises to the cytoplasm. Its subcellular location is the cytoskeleton. The protein resides in the phragmoplast. In terms of biological role, plus-end directed kinesin-like motor enzyme that plays a critical role in the organization of phragmoplast microtubules during cytokinesis. Constitutes a signaling module in association with serine/threonine-protein kinase TIO that is required to support phragmoplast expansion and cell-plate growth in plant cells. Binds microtubules in an ATP-sensitive manner. This Arabidopsis thaliana (Mouse-ear cress) protein is Kinesin-like protein KIN-12A.